The following is a 262-amino-acid chain: Homeobox protein vent1 (262 aa).

Composition is skewed to basic and acidic residues over residues 16–26 (REEAPDGKDSV) and 44–55 (YAKEIPRRKDGQ). Positions 16 to 129 (REEAPDGKDS…KSPKSDLQRR (114 aa)) are disordered. A compositionally biased stretch (polar residues) spans 58–79 (GEITSFQCSSEEARNRQFSNPS). Residues 114–128 (DTEHRSKSPKSDLQR) show a composition bias toward basic and acidic residues. A DNA-binding region (homeobox) is located at residues 127–186 (QRRLRTAFTPQQITRLEQAFNKQRYLGASERKKLATSLQLSEIQVKTWFQNRRMKLKRQI).

The protein localises to the nucleus. In terms of biological role, transcriptional repressor. Cooperates with vent2 in a ventral signaling pathway downstream of bmp4, which antagonizes the Spemann organizer and dorsal mesoderm formation, and leads to ventral mesoderm formation. Acts downstream of bmp4 to repress transcription of foxa4-B/XFD-1'. Binds to DNA with preference for the target sequence 5'-CTATT[T/C]G-3'. Also binds 5'-TGCATTTTG-3' at a lower frequency, and occasionally 5'-TTGATC-3'. Binds to the homeobox 2 (HBX2) repressor element in the promoter of the myf5 gene. Cooperates with vent2 to repress myf5 expression in the ventral domain. The protein is Homeobox protein vent1 of Xenopus tropicalis (Western clawed frog).